A 315-amino-acid polypeptide reads, in one-letter code: Protein-methionine-sulfoxide reductase catalytic subunit MsrP (315 aa).

Residues 1–45 constitute a signal peptide (tat-type signal); it reads MPSYRPPKIASSEITPRQVYLRRREFLGAATLGAMALYGAGKASA. Residues N71, 74-75, C129, T164, N214, R219, and 230-232 each bind Mo-molybdopterin; these read YE and GIK.

This sequence belongs to the MsrP family. Heterodimer of a catalytic subunit (MsrP) and a heme-binding subunit (MsrQ). Mo-molybdopterin is required as a cofactor. In terms of processing, predicted to be exported by the Tat system. The position of the signal peptide cleavage has not been experimentally proven.

The protein localises to the periplasm. The enzyme catalyses L-methionyl-[protein] + a quinone + H2O = L-methionyl-(S)-S-oxide-[protein] + a quinol. The catalysed reaction is L-methionyl-[protein] + a quinone + H2O = L-methionyl-(R)-S-oxide-[protein] + a quinol. Functionally, part of the MsrPQ system that repairs oxidized periplasmic proteins containing methionine sulfoxide residues (Met-O), using respiratory chain electrons. Thus protects these proteins from oxidative-stress damage caused by reactive species of oxygen and chlorine generated by the host defense mechanisms. MsrPQ is essential for the maintenance of envelope integrity under bleach stress, rescuing a wide series of structurally unrelated periplasmic proteins from methionine oxidation. The catalytic subunit MsrP is non-stereospecific, being able to reduce both (R-) and (S-) diastereoisomers of methionine sulfoxide. This Rhizobium etli (strain ATCC 51251 / DSM 11541 / JCM 21823 / NBRC 15573 / CFN 42) protein is Protein-methionine-sulfoxide reductase catalytic subunit MsrP.